The chain runs to 381 residues: MRNDRPVRITRGSGDLYVYATGITTLSTNFPDDLGKSPSTLPEISTASMSALSFLYSQLFVEPPVPTHDFQGQTVIITGSNRGIGFEAARHLLRLNVSRLILAARSAEKGQIAADTLEQLTGRSGVIQVEELDMANQESVQEFATRMEMCRIDAVLLNAGIYTHDFVWADNHESTLTVNVINTFLLAILLLPALRRSSKTWVIQPCISFVASDRHVMYDLPEWKTQNTFQVLNDRQQARMHERYPISKLLEILLARAMAKQLDSNPPNGTGNIIVNSFTPGYCTSGLIENVHGITGFALWLLSKATARTTEVGGRTLVAAIAQGDKSHGKYLNDGHIDESALSPFVRSQEGILAMEKLWEELMEILEQKRPGIGLLLSPVP.

6 residues coordinate NADP(+): Ile84, Lys109, Asp133, Asn158, Tyr244, and Lys248. Tyr244 acts as the Proton acceptor in catalysis. Tyr244 functions as the Proton donor in the catalytic mechanism. Catalysis depends on Lys248, which acts as the Lowers pKa of active site Tyr.

Belongs to the short-chain dehydrogenases/reductases (SDR) family.

In terms of biological role, highly reducing polyketide synthase; part of the gene cluster that mediates the biosynthesis of annullatin D, an alkylated aromatic polyketide with a fused dihydrobenzofuran lactone ring system that exhibits potent agonistic activities toward the cannabinoid receptors. AnuD does not seem to play a role within the pathway. The annullatin backbone 2-hydroxymethyl-3-pentylphenol is assembled from one acetyl-CoA starter unit and 5 malonyl-CoA elongation units by cooperation of the highly reducing polyketide synthase anuA, the short-chain dehydrogenase anuB and the oxidoreductase anuC, before being hydroxylated at the C-5 alkyl chain by the cytochrome P450 monooxygenase anuE to form (8S)-annullatin E. The prenyltransferase anuH subsequently installs one isoprenyl group at the benzene ring to form (8S)-annullatin J. Enzymatic or nonenzymatic dihydro-benzofuran ring formation between the prenyl and the phenolic hydroxyl groups in (8S)-annullatin J results in two diastereomers (2S,9S)-annullatin H and compound 12. The intermediate (2S,9S)-annullatin H is then converted to (2S,9S)-annullatin D by the FAD-linked oxidoreductase anuG-catalyzed five-member lactone ring formation. The isomer 12 acts as a substrate for the short-chain dehydrogenase anuF and is oxidized to (2R)-annullatin F, which is subsequently acetylated by an acetyltransferase leading to (2R)-annullatin G formation. The remaining enzymes identified within the cluster, anuD, anuI and anuJ, seem not to be involved in annullatin biosynthesis. In Penicillium roqueforti (strain FM164), this protein is Short-chain dehydrogenase anuD.